A 184-amino-acid polypeptide reads, in one-letter code: Ribosome-recycling factor (184 aa).

The protein belongs to the RRF family.

The protein localises to the cytoplasm. Its function is as follows. Responsible for the release of ribosomes from messenger RNA at the termination of protein biosynthesis. May increase the efficiency of translation by recycling ribosomes from one round of translation to another. The sequence is that of Ribosome-recycling factor from Stenotrophomonas maltophilia (strain K279a).